The primary structure comprises 446 residues: Glucose-6-phosphate isomerase (446 aa).

Glutamate 287 acts as the Proton donor in catalysis. Catalysis depends on residues histidine 308 and lysine 422.

Belongs to the GPI family.

The protein localises to the cytoplasm. The enzyme catalyses alpha-D-glucose 6-phosphate = beta-D-fructose 6-phosphate. It functions in the pathway carbohydrate biosynthesis; gluconeogenesis. Its pathway is carbohydrate degradation; glycolysis; D-glyceraldehyde 3-phosphate and glycerone phosphate from D-glucose: step 2/4. Catalyzes the reversible isomerization of glucose-6-phosphate to fructose-6-phosphate. This is Glucose-6-phosphate isomerase from Lactobacillus helveticus (strain DPC 4571).